The following is a 166-amino-acid chain: UPF0304 protein VS_1049 (166 aa).

This sequence belongs to the UPF0304 family.

The polypeptide is UPF0304 protein VS_1049 (Vibrio atlanticus (strain LGP32) (Vibrio splendidus (strain Mel32))).